The chain runs to 226 residues: Lipoprotein-releasing system ATP-binding protein LolD (226 aa).

Residues 5–225 (LELVEIERHF…TLKEKKIVEL (221 aa)) enclose the ABC transporter domain. 41-48 (APSGAGKS) provides a ligand contact to ATP.

It belongs to the ABC transporter superfamily. Lipoprotein translocase (TC 3.A.1.125) family. The complex is composed of two ATP-binding proteins (LolD) and two transmembrane proteins (LolC and LolE).

It localises to the cell inner membrane. Its function is as follows. Part of the ABC transporter complex LolCDE involved in the translocation of mature outer membrane-directed lipoproteins, from the inner membrane to the periplasmic chaperone, LolA. Responsible for the formation of the LolA-lipoprotein complex in an ATP-dependent manner. This Bartonella quintana (strain Toulouse) (Rochalimaea quintana) protein is Lipoprotein-releasing system ATP-binding protein LolD.